A 102-amino-acid polypeptide reads, in one-letter code: Small ribosomal subunit protein uS10 (102 aa).

Belongs to the universal ribosomal protein uS10 family. As to quaternary structure, part of the 30S ribosomal subunit.

In terms of biological role, involved in the binding of tRNA to the ribosomes. The sequence is that of Small ribosomal subunit protein uS10 from Roseiflexus castenholzii (strain DSM 13941 / HLO8).